The following is a 175-amino-acid chain: ATP synthase subunit b (175 aa).

The chain crosses the membrane as a helical span at residues Leu-22–Leu-42.

The protein belongs to the ATPase B chain family. In terms of assembly, F-type ATPases have 2 components, F(1) - the catalytic core - and F(0) - the membrane proton channel. F(1) has five subunits: alpha(3), beta(3), gamma(1), delta(1), epsilon(1). F(0) has four main subunits: a(1), b(1), b'(1) and c(10-14). The alpha and beta chains form an alternating ring which encloses part of the gamma chain. F(1) is attached to F(0) by a central stalk formed by the gamma and epsilon chains, while a peripheral stalk is formed by the delta, b and b' chains.

It localises to the cell inner membrane. Functionally, f(1)F(0) ATP synthase produces ATP from ADP in the presence of a proton or sodium gradient. F-type ATPases consist of two structural domains, F(1) containing the extramembraneous catalytic core and F(0) containing the membrane proton channel, linked together by a central stalk and a peripheral stalk. During catalysis, ATP synthesis in the catalytic domain of F(1) is coupled via a rotary mechanism of the central stalk subunits to proton translocation. Its function is as follows. Component of the F(0) channel, it forms part of the peripheral stalk, linking F(1) to F(0). The chain is ATP synthase subunit b from Gloeobacter violaceus (strain ATCC 29082 / PCC 7421).